The sequence spans 352 residues: N-acetyl-gamma-glutamyl-phosphate reductase (352 aa).

Residue C158 is part of the active site.

It belongs to the NAGSA dehydrogenase family. Type 1 subfamily.

Its subcellular location is the cytoplasm. The catalysed reaction is N-acetyl-L-glutamate 5-semialdehyde + phosphate + NADP(+) = N-acetyl-L-glutamyl 5-phosphate + NADPH + H(+). The protein operates within amino-acid biosynthesis; L-arginine biosynthesis; N(2)-acetyl-L-ornithine from L-glutamate: step 3/4. Functionally, catalyzes the NADPH-dependent reduction of N-acetyl-5-glutamyl phosphate to yield N-acetyl-L-glutamate 5-semialdehyde. The chain is N-acetyl-gamma-glutamyl-phosphate reductase from Mycobacterium bovis (strain BCG / Tokyo 172 / ATCC 35737 / TMC 1019).